Consider the following 125-residue polypeptide: Ribonuclease P protein component (125 aa).

Belongs to the RnpA family. As to quaternary structure, consists of a catalytic RNA component (M1 or rnpB) and a protein subunit.

It catalyses the reaction Endonucleolytic cleavage of RNA, removing 5'-extranucleotides from tRNA precursor.. In terms of biological role, RNaseP catalyzes the removal of the 5'-leader sequence from pre-tRNA to produce the mature 5'-terminus. It can also cleave other RNA substrates such as 4.5S RNA. The protein component plays an auxiliary but essential role in vivo by binding to the 5'-leader sequence and broadening the substrate specificity of the ribozyme. This Idiomarina loihiensis (strain ATCC BAA-735 / DSM 15497 / L2-TR) protein is Ribonuclease P protein component.